Reading from the N-terminus, the 359-residue chain is Phospho-N-acetylmuramoyl-pentapeptide-transferase (359 aa).

10 helical membrane-spanning segments follow: residues 3 to 23 (QILI…PVLI), 55 to 75 (VAIL…GLAF), 80 to 100 (IGAS…VGFI), 117 to 137 (TAKT…VLQF), 156 to 176 (IATV…IVSA), 187 to 207 (LDGL…LITF), 231 to 251 (LALI…WNAA), 255 to 275 (IFMG…LSVT), 280 to 300 (ILAV…VLQI), and 334 to 354 (FWLL…GEWL).

The protein belongs to the glycosyltransferase 4 family. MraY subfamily. Mg(2+) is required as a cofactor.

The protein localises to the cell membrane. It carries out the reaction UDP-N-acetyl-alpha-D-muramoyl-L-alanyl-gamma-D-glutamyl-meso-2,6-diaminopimeloyl-D-alanyl-D-alanine + di-trans,octa-cis-undecaprenyl phosphate = di-trans,octa-cis-undecaprenyl diphospho-N-acetyl-alpha-D-muramoyl-L-alanyl-D-glutamyl-meso-2,6-diaminopimeloyl-D-alanyl-D-alanine + UMP. The protein operates within cell wall biogenesis; peptidoglycan biosynthesis. Catalyzes the initial step of the lipid cycle reactions in the biosynthesis of the cell wall peptidoglycan: transfers peptidoglycan precursor phospho-MurNAc-pentapeptide from UDP-MurNAc-pentapeptide onto the lipid carrier undecaprenyl phosphate, yielding undecaprenyl-pyrophosphoryl-MurNAc-pentapeptide, known as lipid I. In Mycobacterium tuberculosis (strain ATCC 25177 / H37Ra), this protein is Phospho-N-acetylmuramoyl-pentapeptide-transferase.